We begin with the raw amino-acid sequence, 419 residues long: UDP-N-acetylglucosamine 1-carboxyvinyltransferase 2 (419 aa).

Position 22-23 (22-23 (KN)) interacts with phosphoenolpyruvate. Arg-92 lines the UDP-N-acetyl-alpha-D-glucosamine pocket. Residue Asp-116 is the Proton donor of the active site. Residues 121 to 125 (RPIDQ), Asp-306, and Leu-328 each bind UDP-N-acetyl-alpha-D-glucosamine.

The protein belongs to the EPSP synthase family. MurA subfamily.

It localises to the cytoplasm. The enzyme catalyses phosphoenolpyruvate + UDP-N-acetyl-alpha-D-glucosamine = UDP-N-acetyl-3-O-(1-carboxyvinyl)-alpha-D-glucosamine + phosphate. It participates in cell wall biogenesis; peptidoglycan biosynthesis. Functionally, cell wall formation. Adds enolpyruvyl to UDP-N-acetylglucosamine. In Latilactobacillus sakei subsp. sakei (strain 23K) (Lactobacillus sakei subsp. sakei), this protein is UDP-N-acetylglucosamine 1-carboxyvinyltransferase 2.